Consider the following 21-residue polypeptide: Hemocyanin subunit 6 (21 aa).

It belongs to the tyrosinase family. Hemocyanin subfamily. In terms of tissue distribution, hemolymph.

The protein localises to the secreted. Its subcellular location is the extracellular space. In terms of biological role, hemocyanins are copper-containing oxygen carriers occurring freely dissolved in the hemolymph of many mollusks and arthropods. This Maja squinado (Mediterranean spider crab) protein is Hemocyanin subunit 6.